The primary structure comprises 119 residues: Large ribosomal subunit protein uL14m (119 aa).

It belongs to the universal ribosomal protein uL14 family.

It localises to the mitochondrion. The protein is Large ribosomal subunit protein uL14m of Tetrahymena pyriformis.